The chain runs to 395 residues: Renin (395 aa).

A signal peptide spans 1–21 (MLRSWEFVLLISCFLCFSSDA). Positions 22-43 (LQRISLKKMPSIRETLQEMGMK) are cleaved as a propeptide — activation peptide. Residue Asn64 is glycosylated (N-linked (GlcNAc...) asparagine). Residues 79–392 (YYGEISIGTP…DRQNNRIGFA (314 aa)) enclose the Peptidase A1 domain. Asp97 is an active-site residue. Disulfide bonds link Cys110–Cys117 and Cys274–Cys278. Residue Asp283 is part of the active site. An intrachain disulfide couples Cys316 to Cys351.

It belongs to the peptidase A1 family. Post-translationally, N-glycosylated. As to expression, expressed by the venom gland (at protein level).

Its subcellular location is the secreted. The catalysed reaction is Cleavage of Leu-|-Xaa bond in angiotensinogen to generate angiotensin I.. Its activity is regulated as follows. Inhibited completely by aspartyl protease inhibitor pepstatin A, but not by the serine- or metalloproteinase inhibitors PMSF or EDTA. Its function is as follows. Renin is a highly specific endopeptidase, whose only known function is to generate angiotensin I from angiotensinogen in the plasma, initiating a cascade of reactions that produce an elevation of blood pressure and increased sodium retention by the kidney. This protein is also found in snake venom and shown to specifically cleave human and porcine angiotensinogen into angiotensin I. It does not have general protease activity, no cleavage of alpha or beta casein. May be directly responsible for elevation of blood pressure in the victims of envenomation. The protein is Renin of Echis ocellatus (Ocellated saw-scaled viper).